A 122-amino-acid polypeptide reads, in one-letter code: Flowering-promoting factor 1-like protein 3 (122 aa).

The tract at residues 16–36 is disordered; it reads ENPGSEESSSAGDGGGGGRRK.

This sequence belongs to the FPF1 family.

This is Flowering-promoting factor 1-like protein 3 from Oryza sativa subsp. japonica (Rice).